A 165-amino-acid chain; its full sequence is NADPH-dependent 7-cyano-7-deazaguanine reductase (165 aa).

Cys56 functions as the Thioimide intermediate in the catalytic mechanism. The active-site Proton donor is Asp63. Substrate-binding positions include 78 to 80 (VES) and 97 to 98 (HE).

The protein belongs to the GTP cyclohydrolase I family. QueF type 1 subfamily.

The protein resides in the cytoplasm. The catalysed reaction is 7-aminomethyl-7-carbaguanine + 2 NADP(+) = 7-cyano-7-deazaguanine + 2 NADPH + 3 H(+). It functions in the pathway tRNA modification; tRNA-queuosine biosynthesis. Catalyzes the NADPH-dependent reduction of 7-cyano-7-deazaguanine (preQ0) to 7-aminomethyl-7-deazaguanine (preQ1). The protein is NADPH-dependent 7-cyano-7-deazaguanine reductase of Bacillus anthracis (strain A0248).